A 237-amino-acid chain; its full sequence is Orotidine 5'-phosphate decarboxylase (237 aa).

Substrate is bound by residues Asp17, Lys39, 66 to 75, Thr121, Arg182, Gln191, Gly211, and Arg212; that span reads DLKLHDIGNT. The active-site Proton donor is the Lys68.

It belongs to the OMP decarboxylase family. Type 1 subfamily. In terms of assembly, homodimer.

It carries out the reaction orotidine 5'-phosphate + H(+) = UMP + CO2. It functions in the pathway pyrimidine metabolism; UMP biosynthesis via de novo pathway; UMP from orotate: step 2/2. Functionally, catalyzes the decarboxylation of orotidine 5'-monophosphate (OMP) to uridine 5'-monophosphate (UMP). This chain is Orotidine 5'-phosphate decarboxylase, found in Bradyrhizobium diazoefficiens (strain JCM 10833 / BCRC 13528 / IAM 13628 / NBRC 14792 / USDA 110).